Consider the following 216-residue polypeptide: N-(5'-phosphoribosyl)anthranilate isomerase (216 aa).

This sequence belongs to the TrpF family.

The enzyme catalyses N-(5-phospho-beta-D-ribosyl)anthranilate = 1-(2-carboxyphenylamino)-1-deoxy-D-ribulose 5-phosphate. It participates in amino-acid biosynthesis; L-tryptophan biosynthesis; L-tryptophan from chorismate: step 3/5. The chain is N-(5'-phosphoribosyl)anthranilate isomerase from Leptospira borgpetersenii serovar Hardjo-bovis (strain JB197).